Here is a 98-residue protein sequence, read N- to C-terminus: NADH-ubiquinone oxidoreductase chain 4L (98 aa).

3 helical membrane-spanning segments follow: residues 2–22, 26–46, and 59–79; these read TSAFLNLTMAFTLSLLGTFMF, LMSTLLCLEGMMLSLFVMTST, and IPITILVFAACEAAVGLALLV.

The protein belongs to the complex I subunit 4L family. In terms of assembly, core subunit of respiratory chain NADH dehydrogenase (Complex I) which is composed of 45 different subunits.

It localises to the mitochondrion inner membrane. The catalysed reaction is a ubiquinone + NADH + 5 H(+)(in) = a ubiquinol + NAD(+) + 4 H(+)(out). Core subunit of the mitochondrial membrane respiratory chain NADH dehydrogenase (Complex I) which catalyzes electron transfer from NADH through the respiratory chain, using ubiquinone as an electron acceptor. Part of the enzyme membrane arm which is embedded in the lipid bilayer and involved in proton translocation. In Rattus norvegicus (Rat), this protein is NADH-ubiquinone oxidoreductase chain 4L.